Here is a 144-residue protein sequence, read N- to C-terminus: Methylglyoxal synthase (144 aa).

The MGS-like domain maps to M1–R144. Substrate is bound by residues H8, K12, T34–T37, and S54–G55. Catalysis depends on D60, which acts as the Proton donor/acceptor. H87 contacts substrate.

This sequence belongs to the methylglyoxal synthase family.

The enzyme catalyses dihydroxyacetone phosphate = methylglyoxal + phosphate. Functionally, catalyzes the formation of methylglyoxal from dihydroxyacetone phosphate. This is Methylglyoxal synthase from Geobacillus thermodenitrificans (strain NG80-2).